The chain runs to 137 residues: Small ribosomal subunit protein uS12 (137 aa).

Residues 31 to 41 are compositionally biased toward polar residues; it reads MSRKQTNNTAP. The segment at 31 to 57 is disordered; the sequence is MSRKQTNNTAPQKRGVATRVGTMTPKK. Residue D102 is modified to 3-methylthioaspartic acid.

The protein belongs to the universal ribosomal protein uS12 family. Part of the 30S ribosomal subunit. Contacts proteins S8 and S17. May interact with IF1 in the 30S initiation complex.

With S4 and S5 plays an important role in translational accuracy. Functionally, interacts with and stabilizes bases of the 16S rRNA that are involved in tRNA selection in the A site and with the mRNA backbone. Located at the interface of the 30S and 50S subunits, it traverses the body of the 30S subunit contacting proteins on the other side and probably holding the rRNA structure together. The combined cluster of proteins S8, S12 and S17 appears to hold together the shoulder and platform of the 30S subunit. The sequence is that of Small ribosomal subunit protein uS12 from Oenococcus oeni (strain ATCC BAA-331 / PSU-1).